A 286-amino-acid chain; its full sequence is Thymidylate synthase (286 aa).

Residue Arg140–Arg141 participates in dUMP binding. Cys161 serves as the catalytic Nucleophile. DUMP is bound by residues Arg185 to Asp188, Asn196, and His226 to Tyr228. Asp188 is a binding site for (6R)-5,10-methylene-5,6,7,8-tetrahydrofolate. Ala285 lines the (6R)-5,10-methylene-5,6,7,8-tetrahydrofolate pocket.

This sequence belongs to the thymidylate synthase family. Bacterial-type ThyA subfamily. As to quaternary structure, homodimer.

The protein localises to the cytoplasm. It catalyses the reaction dUMP + (6R)-5,10-methylene-5,6,7,8-tetrahydrofolate = 7,8-dihydrofolate + dTMP. It functions in the pathway pyrimidine metabolism; dTTP biosynthesis. Catalyzes the reductive methylation of 2'-deoxyuridine-5'-monophosphate (dUMP) to 2'-deoxythymidine-5'-monophosphate (dTMP) while utilizing 5,10-methylenetetrahydrofolate (mTHF) as the methyl donor and reductant in the reaction, yielding dihydrofolate (DHF) as a by-product. This enzymatic reaction provides an intracellular de novo source of dTMP, an essential precursor for DNA biosynthesis. The protein is Thymidylate synthase of Streptococcus thermophilus (strain ATCC BAA-491 / LMD-9).